The following is an 848-amino-acid chain: ATP-dependent RNA helicase dbp10 (848 aa).

Positions Asp-22 to Asp-43 are disordered. Residues Ser-69–Arg-97 carry the Q motif motif. One can recognise a Helicase ATP-binding domain in the interval Ile-100 to Val-272. Residue Ala-113 to Thr-120 participates in ATP binding. The DEAD box signature appears at Asp-220–Asp-223. In terms of domain architecture, Helicase C-terminal spans Arg-330–Ser-480. The tract at residues Asn-610 to Lys-650 is disordered. A compositionally biased stretch (basic and acidic residues) spans Ile-617 to Thr-627. Over residues Asp-628–Ala-637 the composition is skewed to polar residues. Phosphoserine is present on residues Ser-638, Ser-733, and Ser-736. The disordered stretch occupies residues Ala-768–Gly-813. Residues Pro-789–Ile-812 are compositionally biased toward basic and acidic residues.

This sequence belongs to the DEAD box helicase family. DDX54/DBP10 subfamily.

Its subcellular location is the nucleus. The protein resides in the nucleolus. The catalysed reaction is ATP + H2O = ADP + phosphate + H(+). ATP-binding RNA helicase involved in the biogenesis of 60S ribosomal subunits and is required for the normal formation of 25S and 5.8S rRNAs. The chain is ATP-dependent RNA helicase dbp10 (dbp10) from Schizosaccharomyces pombe (strain 972 / ATCC 24843) (Fission yeast).